A 162-amino-acid chain; its full sequence is 6,7-dimethyl-8-ribityllumazine synthase (162 aa).

Residues Phe22, 56–58, and 80–82 contribute to the 5-amino-6-(D-ribitylamino)uracil site; these read TFE and AVI. 85 to 86 serves as a coordination point for (2S)-2-hydroxy-3-oxobutyl phosphate; that stretch reads GT. His88 acts as the Proton donor in catalysis. Met113 contributes to the 5-amino-6-(D-ribitylamino)uracil binding site. A (2S)-2-hydroxy-3-oxobutyl phosphate-binding site is contributed by Arg127.

The protein belongs to the DMRL synthase family.

The catalysed reaction is (2S)-2-hydroxy-3-oxobutyl phosphate + 5-amino-6-(D-ribitylamino)uracil = 6,7-dimethyl-8-(1-D-ribityl)lumazine + phosphate + 2 H2O + H(+). Its pathway is cofactor biosynthesis; riboflavin biosynthesis; riboflavin from 2-hydroxy-3-oxobutyl phosphate and 5-amino-6-(D-ribitylamino)uracil: step 1/2. In terms of biological role, catalyzes the formation of 6,7-dimethyl-8-ribityllumazine by condensation of 5-amino-6-(D-ribitylamino)uracil with 3,4-dihydroxy-2-butanone 4-phosphate. This is the penultimate step in the biosynthesis of riboflavin. The sequence is that of 6,7-dimethyl-8-ribityllumazine synthase from Anaeromyxobacter dehalogenans (strain 2CP-1 / ATCC BAA-258).